A 170-amino-acid polypeptide reads, in one-letter code: Adenine phosphoribosyltransferase (170 aa).

The protein belongs to the purine/pyrimidine phosphoribosyltransferase family. In terms of assembly, homodimer.

It is found in the cytoplasm. The catalysed reaction is AMP + diphosphate = 5-phospho-alpha-D-ribose 1-diphosphate + adenine. It functions in the pathway purine metabolism; AMP biosynthesis via salvage pathway; AMP from adenine: step 1/1. In terms of biological role, catalyzes a salvage reaction resulting in the formation of AMP, that is energically less costly than de novo synthesis. This Fusobacterium nucleatum subsp. nucleatum (strain ATCC 25586 / DSM 15643 / BCRC 10681 / CIP 101130 / JCM 8532 / KCTC 2640 / LMG 13131 / VPI 4355) protein is Adenine phosphoribosyltransferase.